Reading from the N-terminus, the 279-residue chain is NADPH-dependent 7-cyano-7-deazaguanine reductase (279 aa).

Substrate is bound at residue Ile-86–Ser-88. Position 88–89 (Ser-88–Lys-89) interacts with NADPH. Cys-187 acts as the Thioimide intermediate in catalysis. Catalysis depends on Asp-194, which acts as the Proton donor. A substrate-binding site is contributed by His-226–Glu-227. NADPH is bound at residue Arg-255–Gly-256.

It belongs to the GTP cyclohydrolase I family. QueF type 2 subfamily. As to quaternary structure, homodimer.

The protein resides in the cytoplasm. It carries out the reaction 7-aminomethyl-7-carbaguanine + 2 NADP(+) = 7-cyano-7-deazaguanine + 2 NADPH + 3 H(+). The protein operates within tRNA modification; tRNA-queuosine biosynthesis. In terms of biological role, catalyzes the NADPH-dependent reduction of 7-cyano-7-deazaguanine (preQ0) to 7-aminomethyl-7-deazaguanine (preQ1). The protein is NADPH-dependent 7-cyano-7-deazaguanine reductase of Actinobacillus pleuropneumoniae serotype 5b (strain L20).